The sequence spans 252 residues: Neurexophilin-3 (252 aa).

A signal peptide spans 1-22; sequence MQLTRCCFVFLVQGSLYLVICG. Positions 23–75 are II; that stretch reads QEDGPPGSEDPEHDDHEGQPRPRVPRKRGHISPKSRPLANSTLLGLLAPPGEV. The tract at residues 27-59 is disordered; it reads PPGSEDPEHDDHEGQPRPRVPRKRGHISPKSRP. The segment covering 45 to 55 has biased composition (basic residues); the sequence is RVPRKRGHISP. N-linked (GlcNAc...) asparagine glycans are attached at residues asparagine 62, asparagine 127, asparagine 137, and asparagine 143. An III region spans residues 76-157; it reads WGILGQPPNR…LVPPSKAVEF (82 aa). The tract at residues 158-166 is IV (linker domain); that stretch reads HQEQQIFIE. The segment at 167 to 252 is v (Cys-rich); the sequence is AKASKIFNCR…HSDTPYYPSG (86 aa).

It belongs to the neurexophilin family. Post-translationally, may be proteolytically processed at the boundary between the N-terminal non-conserved and the central conserved domain in neuron-like cells. In terms of tissue distribution, brain. Detected in several other tissues.

Its subcellular location is the secreted. Its function is as follows. May be signaling molecules that resemble neuropeptides. Ligand for alpha-neurexins. The protein is Neurexophilin-3 (Nxph3) of Rattus norvegicus (Rat).